Consider the following 242-residue polypeptide: Putative serine/threonine-protein kinase (242 aa).

Residues 49 to 242 (FSSKNKVGEG…KSDVYSFGVL (194 aa)) form the Protein kinase domain. ATP is bound by residues 55–63 (VGEGGCGAV) and lysine 77. Aspartate 177 (proton acceptor) is an active-site residue.

Belongs to the protein kinase superfamily. Ser/Thr protein kinase family.

It catalyses the reaction L-seryl-[protein] + ATP = O-phospho-L-seryl-[protein] + ADP + H(+). The enzyme catalyses L-threonyl-[protein] + ATP = O-phospho-L-threonyl-[protein] + ADP + H(+). This Helianthus annuus (Common sunflower) protein is Putative serine/threonine-protein kinase.